A 378-amino-acid chain; its full sequence is UDP-N-acetylglucosamine--N-acetylmuramyl-(pentapeptide) pyrophosphoryl-undecaprenol N-acetylglucosamine transferase (378 aa).

UDP-N-acetyl-alpha-D-glucosamine is bound by residues 14-16 (TGG), Asn125, Arg165, Ser193, and Gln293.

It belongs to the glycosyltransferase 28 family. MurG subfamily.

It is found in the cell inner membrane. The enzyme catalyses di-trans,octa-cis-undecaprenyl diphospho-N-acetyl-alpha-D-muramoyl-L-alanyl-D-glutamyl-meso-2,6-diaminopimeloyl-D-alanyl-D-alanine + UDP-N-acetyl-alpha-D-glucosamine = di-trans,octa-cis-undecaprenyl diphospho-[N-acetyl-alpha-D-glucosaminyl-(1-&gt;4)]-N-acetyl-alpha-D-muramoyl-L-alanyl-D-glutamyl-meso-2,6-diaminopimeloyl-D-alanyl-D-alanine + UDP + H(+). It participates in cell wall biogenesis; peptidoglycan biosynthesis. Its function is as follows. Cell wall formation. Catalyzes the transfer of a GlcNAc subunit on undecaprenyl-pyrophosphoryl-MurNAc-pentapeptide (lipid intermediate I) to form undecaprenyl-pyrophosphoryl-MurNAc-(pentapeptide)GlcNAc (lipid intermediate II). The sequence is that of UDP-N-acetylglucosamine--N-acetylmuramyl-(pentapeptide) pyrophosphoryl-undecaprenol N-acetylglucosamine transferase from Bartonella quintana (strain Toulouse) (Rochalimaea quintana).